A 440-amino-acid polypeptide reads, in one-letter code: DNA dC-&gt;dU-editing enzyme APOBEC-3 (440 aa).

2 consecutive CMP/dCMP-type deaminase domains span residues 49 to 165 (GRKD…AQVA) and 249 to 368 (EEEF…LCSL). Residue His-82 coordinates Zn(2+). Glu-84 acts as the Proton donor in catalysis. Zn(2+)-binding residues include Cys-116, Cys-119, His-299, Cys-327, and Cys-330.

Belongs to the cytidine and deoxycytidylate deaminase family. Homodimer. Interacts with mouse mammary tumor virus (MMTV) nucleocapsid protein p14. Zn(2+) serves as cofactor. As to expression, expressed in spleen, node and lung.

Its subcellular location is the cytoplasm. The enzyme catalyses a 2'-deoxycytidine in single-stranded DNA + H2O + H(+) = a 2'-deoxyuridine in single-stranded DNA + NH4(+). DNA deaminase (cytidine deaminase) which acts as an inhibitor of retrovirus replication and retrotransposon mobility via deaminase-dependent and -independent mechanisms. Selectively targets single-stranded DNA and does not deaminate double-stranded DNA or single- or double-stranded RNA. Exhibits antiviral activity against HIV-1, simian immunodeficiency viruses (SIVs), mouse mammary tumor virus (MMTV) and friend murine leukemia virus (FrMLV) and may inhibit the mobility of LTR retrotransposons. The protein is DNA dC-&gt;dU-editing enzyme APOBEC-3 (Apobec3) of Mus musculus (Mouse).